The sequence spans 920 residues: Anillin-related medial ring protein mid1 (920 aa).

The tract at residues 1-452 (MKEQEFSYRE…LSSEDLRHPS (452 aa)) is disordered. Residues S15 and S24 each carry the phosphoserine modification. T34 carries the post-translational modification Phosphothreonine. Residues S46 and S62 each carry the phosphoserine modification. Residues 69–81 (LNVATDLLESLDL) carry the Nuclear export sequence (NES) 1 motif. Residue S95 is modified to Phosphoserine. The segment covering 461-481 (RTYSNYCENEPNKSSQSLVSS) has biased composition (polar residues). S531 is subject to Phosphoserine. Residues 538–561 (DLPSQDKSTSYEVPNGTENQSPRP) are disordered. The span at 542-561 (QDKSTSYEVPNGTENQSPRP) shows a compositional bias: polar residues. The interval 551 to 920 (PNGTENQSPR…WLQEYVNFMA (370 aa)) is cryptic lipid-binding C2 domain. Residues 681–710 (RKFFDKLFNRRKKRKLNKAAAVENSKAKKS) carry the Nuclear localization sequence (NLS) motif. The Nuclear export sequence (NES) 2 motif lies at 763–773 (LGNLTLTCLYI). The PH domain occupies 802-901 (LYNEGYLYRL…WLQVMNSRSF (100 aa)).

As to quaternary structure, homodimer. Interacts with blt1 and cdr2. Interacts with gef2. Interacts with plo1 and rng2. Interacts with fhk2 and sep1. Interacts with clp1. In terms of processing, phosphorylated. At the onset of mitosis, becomes hyperphosphorylated, leaves the nucleus, and forms a medial ring. Phosphorylation by plo1 and other kinases may contribute to solubilizing mid1 for export from the nucleus. Phosphorylation by sid2 drives removal from the cortex at the actomyosin contractile ring constriction onset.

The protein resides in the nucleus. It localises to the cytoplasm. Its subcellular location is the cell cortex. It is found in the cytoskeleton. Functionally, scaffold protein that anchors the contractile ring (CR) at the cell equator during cytokinesis. At the onset of mitosis, membrane-bound oligomers of mid1 assemble recruitment platforms for cytokinetic ring components at the medial cortex and stabilize the ring position during its compaction. Recruits dephosphorylated myo2, but also rng2, clp1 and cdc15 to nodes and to place cytokinetic nodes around the cell equator the medial cortex to promote the ring assembly in cooperation with F-actin. Necessary to stabilize the mitotic spindle perpendicular to the axis of cell division. Also recruits the cdr2 kinase to the CR. In the nucleus, binds to the promoter regions of M-G1 transcribed genes to negatively regulate their expression. This Schizosaccharomyces pombe (strain 972 / ATCC 24843) (Fission yeast) protein is Anillin-related medial ring protein mid1.